We begin with the raw amino-acid sequence, 258 residues long: MKRIVCLALFLSMTGCTTLEPIETPAQENATTVVDAVEGDKAAQESSGIIDTLRDRTDPIAGDPAWAPINPKKKQEHYAAATGSLFNANHIGSMYDDSKPRGIGDIITVALDENTRATKKANADMSKSNDASMEPLAVGGENLELGKYNFSYDLSNTNTFAGDASANQSNSISGYITVEVIEVLANGNLVVRGEKWMTLNTGDEYIRLSGTIRPDDIDFENTIASNRVSNARIQYSGTGVQKDMQEPGFLARFFNVSL.

An N-terminal signal peptide occupies residues 1-15 (MKRIVCLALFLSMTG). Cys16 carries N-palmitoyl cysteine lipidation. A lipid anchor (S-diacylglycerol cysteine) is attached at Cys16.

The protein belongs to the FlgH family. In terms of assembly, the basal body constitutes a major portion of the flagellar organelle and consists of four rings (L,P,S, and M) mounted on a central rod.

Its subcellular location is the cell outer membrane. It localises to the bacterial flagellum basal body. Functionally, assembles around the rod to form the L-ring and probably protects the motor/basal body from shearing forces during rotation. In Vibrio atlanticus (strain LGP32) (Vibrio splendidus (strain Mel32)), this protein is Flagellar L-ring protein.